The following is a 278-amino-acid chain: Elongation factor Ts (278 aa).

Residues 82–85 form an involved in Mg(2+) ion dislocation from EF-Tu region; the sequence is TDFV.

The protein belongs to the EF-Ts family.

Its subcellular location is the cytoplasm. Associates with the EF-Tu.GDP complex and induces the exchange of GDP to GTP. It remains bound to the aminoacyl-tRNA.EF-Tu.GTP complex up to the GTP hydrolysis stage on the ribosome. This Streptomyces griseus subsp. griseus (strain JCM 4626 / CBS 651.72 / NBRC 13350 / KCC S-0626 / ISP 5235) protein is Elongation factor Ts.